The primary structure comprises 249 residues: Phosphate import ATP-binding protein PstB (249 aa).

An ABC transporter domain is found at 3–244; the sequence is IEANDVHVYY…PKKKRTQNYI (242 aa). Residue 35-42 participates in ATP binding; it reads GPSGCGKS.

It belongs to the ABC transporter superfamily. Phosphate importer (TC 3.A.1.7) family. In terms of assembly, the complex is composed of two ATP-binding proteins (PstB), two transmembrane proteins (PstC and PstA) and a solute-binding protein (PstS).

It localises to the cell inner membrane. The catalysed reaction is phosphate(out) + ATP + H2O = ADP + 2 phosphate(in) + H(+). Functionally, part of the ABC transporter complex PstSACB involved in phosphate import. Responsible for energy coupling to the transport system. This Cytophaga hutchinsonii (strain ATCC 33406 / DSM 1761 / CIP 103989 / NBRC 15051 / NCIMB 9469 / D465) protein is Phosphate import ATP-binding protein PstB.